Reading from the N-terminus, the 399-residue chain is Probable endo-xylogalacturonan hydrolase A (399 aa).

The first 19 residues, 1-19, serve as a signal peptide directing secretion; that stretch reads MTFGKAAFLSFSLFGASWA. 5 PbH1 repeats span residues 177 to 207, 208 to 229, 231 to 251, 260 to 283, and 293 to 314; these read TTNA…DIGE, STYV…AFKP, CNYL…SVGS, VQNV…KTYP, and VTNV…QIQS. The active-site Proton donor is D222. H245 is a catalytic residue. N295 and N382 each carry an N-linked (GlcNAc...) asparagine glycan.

This sequence belongs to the glycosyl hydrolase 28 family.

It is found in the secreted. Pectinolytic enzyme involved in the degradation of xylogalacturonan (xga), a galacturonan backbone heavily substituted with xylose, and which is one important component of the hairy regions of pectin. Activity requires a galacturonic acid backbone substituted with xylose. The sequence is that of Probable endo-xylogalacturonan hydrolase A (xghA) from Emericella nidulans (strain FGSC A4 / ATCC 38163 / CBS 112.46 / NRRL 194 / M139) (Aspergillus nidulans).